Here is a 182-residue protein sequence, read N- to C-terminus: Probable RNA 2'-phosphotransferase (182 aa).

This sequence belongs to the KptA/TPT1 family.

In terms of biological role, removes the 2'-phosphate from RNA via an intermediate in which the phosphate is ADP-ribosylated by NAD followed by a presumed transesterification to release the RNA and generate ADP-ribose 1''-2''-cyclic phosphate (APPR&gt;P). May function as an ADP-ribosylase. The protein is Probable RNA 2'-phosphotransferase of Acetivibrio thermocellus (strain ATCC 27405 / DSM 1237 / JCM 9322 / NBRC 103400 / NCIMB 10682 / NRRL B-4536 / VPI 7372) (Clostridium thermocellum).